The chain runs to 504 residues: Histidine ammonia-lyase (504 aa).

Residues 141–143 constitute a cross-link (5-imidazolinone (Ala-Gly)); the sequence is ASG. S142 carries the 2,3-didehydroalanine (Ser) modification.

Belongs to the PAL/histidase family. Post-translationally, contains an active site 4-methylidene-imidazol-5-one (MIO), which is formed autocatalytically by cyclization and dehydration of residues Ala-Ser-Gly.

It is found in the cytoplasm. The enzyme catalyses L-histidine = trans-urocanate + NH4(+). The protein operates within amino-acid degradation; L-histidine degradation into L-glutamate; N-formimidoyl-L-glutamate from L-histidine: step 1/3. The sequence is that of Histidine ammonia-lyase from Geobacillus kaustophilus (strain HTA426).